A 1221-amino-acid polypeptide reads, in one-letter code: Putative DNA-directed RNA polymerase II subunit RPB2 homolog (1221 aa).

Low complexity-rich tracts occupy residues 1-54 and 692-701; these read MSRG…SASS and PAPSSSPSDS. 2 disordered regions span residues 1–63 and 673–701; these read MSRG…PMSE and RGSG…PSDS. Asp823 is a binding site for Mg(2+). Zn(2+)-binding residues include Cys1174, Cys1177, Cys1187, and Cys1190. The segment at 1174–1190 adopts a C4-type zinc-finger fold; sequence CKECGRISDHFEYCRMC.

This sequence belongs to the RNA polymerase beta chain family.

It carries out the reaction RNA(n) + a ribonucleoside 5'-triphosphate = RNA(n+1) + diphosphate. In terms of biological role, component of the DNA-dependent RNA polymerase that catalyzes the transcription of DNA into RNA using the four ribonucleoside triphosphates as substrates. Second largest component of RNA polymerase II which synthesizes mRNA precursors and many functional non-coding RNAs. Proposed to contribute to the polymerase catalytic activity and forms the polymerase active center together with the largest subunit. The polypeptide is Putative DNA-directed RNA polymerase II subunit RPB2 homolog (Dryophytes versicolor (chameleon treefrog)).